A 43-amino-acid polypeptide reads, in one-letter code: Delta-actitoxin-Bca1a (43 aa).

Cystine bridges form between Cys1-Cys41, Cys3-Cys31, and Cys24-Cys42.

It is found in the secreted. It localises to the nematocyst. Its function is as follows. Binds specifically to voltage-gated sodium channels (Nav), thereby delaying their inactivation during signal transduction. Thus it strongly stimulates mammalian cardiac muscle contraction. This is Delta-actitoxin-Bca1a from Bunodosoma capense (Knobbly sea anemone).